A 211-amino-acid polypeptide reads, in one-letter code: C-type lectin domain family 2 member L (211 aa).

The segment at 1–53 (MEPAREPPARARPPPPAARPAPAAPRPRSPAEAEARGPEGLLRRSGSGYEGST) is disordered. Residues 10 to 28 (RARPPPPAARPAPAAPRPR) are compositionally biased toward pro residues. Ser-29 carries the post-translational modification Phosphoserine. Residues 66-86 (LLLGAIAVLLFAILVVMSILA) form a helical membrane-spanning segment. 3 disulfide bridges follow: Cys-97–Cys-108, Cys-125–Cys-205, and Cys-184–Cys-197. The region spanning 104-206 (YGRKCYYFSE…CLTTRPWVCS (103 aa)) is the C-type lectin domain.

Its subcellular location is the membrane. The polypeptide is C-type lectin domain family 2 member L (Clec2l) (Rattus norvegicus (Rat)).